The following is an 82-amino-acid chain: Small ribosomal subunit protein bS16 (82 aa).

The protein belongs to the bacterial ribosomal protein bS16 family.

This chain is Small ribosomal subunit protein bS16, found in Yersinia pseudotuberculosis serotype O:1b (strain IP 31758).